Consider the following 279-residue polypeptide: NADPH-dependent 7-cyano-7-deazaguanine reductase (279 aa).

86–88 lines the substrate pocket; the sequence is IES. Residue 88–89 participates in NADPH binding; sequence SK. Catalysis depends on Cys-186, which acts as the Thioimide intermediate. The active-site Proton donor is Asp-193. 225-226 provides a ligand contact to substrate; that stretch reads HE. Residue 254–255 participates in NADPH binding; sequence RG.

Belongs to the GTP cyclohydrolase I family. QueF type 2 subfamily. In terms of assembly, homodimer.

The protein localises to the cytoplasm. It carries out the reaction 7-aminomethyl-7-carbaguanine + 2 NADP(+) = 7-cyano-7-deazaguanine + 2 NADPH + 3 H(+). The protein operates within tRNA modification; tRNA-queuosine biosynthesis. Functionally, catalyzes the NADPH-dependent reduction of 7-cyano-7-deazaguanine (preQ0) to 7-aminomethyl-7-deazaguanine (preQ1). This is NADPH-dependent 7-cyano-7-deazaguanine reductase from Chromobacterium violaceum (strain ATCC 12472 / DSM 30191 / JCM 1249 / CCUG 213 / NBRC 12614 / NCIMB 9131 / NCTC 9757 / MK).